A 549-amino-acid chain; its full sequence is Ribosomal protein S6 kinase-like 1 (549 aa).

The region spanning 87–115 (IHVDPNKERREAVKLKITKYLRRAEEIFN) is the MIT domain. The 395-residue stretch at 145–539 (SAVEQLRGCR…VSKLKSHPFF (395 aa)) folds into the Protein kinase domain. ATP is bound by residues 151–159 (RGCRVVGVI) and Lys177. The interval 260–325 (LTPARLPSGH…SDLPKAPGGH (66 aa)) is disordered. Catalysis depends on Asp412, which acts as the Proton acceptor.

Belongs to the protein kinase superfamily. Ser/Thr protein kinase family. S6 kinase subfamily.

The catalysed reaction is L-seryl-[protein] + ATP = O-phospho-L-seryl-[protein] + ADP + H(+). The enzyme catalyses L-threonyl-[protein] + ATP = O-phospho-L-threonyl-[protein] + ADP + H(+). In Pongo abelii (Sumatran orangutan), this protein is Ribosomal protein S6 kinase-like 1 (RPS6KL1).